The chain runs to 227 residues: UPF0173 metal-dependent hydrolase STK_14180 (227 aa).

Belongs to the UPF0173 family.

The chain is UPF0173 metal-dependent hydrolase STK_14180 from Sulfurisphaera tokodaii (strain DSM 16993 / JCM 10545 / NBRC 100140 / 7) (Sulfolobus tokodaii).